A 251-amino-acid polypeptide reads, in one-letter code: MTLAVRVIPCLDVDNGRVVKGVNFQNLRDAGDPVEMAKVYDAEGADELTFLDITASSGNRETTYDVVRRTAEQVFIPLTVGGGVRTPDDVDKLLRAGADKVGVNTAAIARPELIREIAERFGRQVLVLSVDARRTESGSFEVTTHGGRKGTGIDAVEWAHRAAELGAGEILLNSMDADGTKDGYDLEMIAAVRAHVTVPVIASGGAGKLDHFPPAIAAGADAVLAASVFHFGDLRIGEVKETLRAAGHPVR.

Active-site residues include Asp-12 and Asp-131.

It belongs to the HisA/HisF family. As to quaternary structure, heterodimer of HisH and HisF.

Its subcellular location is the cytoplasm. The catalysed reaction is 5-[(5-phospho-1-deoxy-D-ribulos-1-ylimino)methylamino]-1-(5-phospho-beta-D-ribosyl)imidazole-4-carboxamide + L-glutamine = D-erythro-1-(imidazol-4-yl)glycerol 3-phosphate + 5-amino-1-(5-phospho-beta-D-ribosyl)imidazole-4-carboxamide + L-glutamate + H(+). Its pathway is amino-acid biosynthesis; L-histidine biosynthesis; L-histidine from 5-phospho-alpha-D-ribose 1-diphosphate: step 5/9. In terms of biological role, IGPS catalyzes the conversion of PRFAR and glutamine to IGP, AICAR and glutamate. The HisF subunit catalyzes the cyclization activity that produces IGP and AICAR from PRFAR using the ammonia provided by the HisH subunit. The protein is Imidazole glycerol phosphate synthase subunit HisF of Streptomyces avermitilis (strain ATCC 31267 / DSM 46492 / JCM 5070 / NBRC 14893 / NCIMB 12804 / NRRL 8165 / MA-4680).